Here is a 72-residue protein sequence, read N- to C-terminus: Translation initiation factor IF-1 (72 aa).

Residues 1–72 form the S1-like domain; it reads MAKEDAIELQ…SKGRIVFRAR (72 aa).

Belongs to the IF-1 family. In terms of assembly, component of the 30S ribosomal translation pre-initiation complex which assembles on the 30S ribosome in the order IF-2 and IF-3, IF-1 and N-formylmethionyl-tRNA(fMet); mRNA recruitment can occur at any time during PIC assembly.

Its subcellular location is the cytoplasm. One of the essential components for the initiation of protein synthesis. Stabilizes the binding of IF-2 and IF-3 on the 30S subunit to which N-formylmethionyl-tRNA(fMet) subsequently binds. Helps modulate mRNA selection, yielding the 30S pre-initiation complex (PIC). Upon addition of the 50S ribosomal subunit IF-1, IF-2 and IF-3 are released leaving the mature 70S translation initiation complex. This is Translation initiation factor IF-1 from Aliivibrio fischeri (strain ATCC 700601 / ES114) (Vibrio fischeri).